A 453-amino-acid polypeptide reads, in one-letter code: tRNA modification GTPase MnmE (453 aa).

3 residues coordinate (6S)-5-formyl-5,6,7,8-tetrahydrofolate: Arg-22, Glu-79, and Lys-119. A TrmE-type G domain is found at 215–376 (GMKVVIAGRP…LKQHLKSLMG (162 aa)). Residue Asn-225 coordinates K(+). Residues 225–230 (NAGKSS), 244–250 (TEIAGTT), 269–272 (DTAG), and 334–337 (NKAD) contribute to the GTP site. Ser-229 provides a ligand contact to Mg(2+). K(+)-binding residues include Thr-244, Ile-246, and Thr-249. Thr-250 provides a ligand contact to Mg(2+). Position 453 (Lys-453) interacts with (6S)-5-formyl-5,6,7,8-tetrahydrofolate.

This sequence belongs to the TRAFAC class TrmE-Era-EngA-EngB-Septin-like GTPase superfamily. TrmE GTPase family. In terms of assembly, homodimer. Heterotetramer of two MnmE and two MnmG subunits. Requires K(+) as cofactor.

It is found in the cytoplasm. In terms of biological role, exhibits a very high intrinsic GTPase hydrolysis rate. Involved in the addition of a carboxymethylaminomethyl (cmnm) group at the wobble position (U34) of certain tRNAs, forming tRNA-cmnm(5)s(2)U34. The chain is tRNA modification GTPase MnmE from Shewanella sp. (strain MR-7).